A 141-amino-acid chain; its full sequence is Vesicle-associated membrane protein 4 (141 aa).

Residues 1–51 (MPPKFKRHLNDDDVTGSVKSERRNLLEDDSDEEEDFFLRGPSGPRFGPRND) form a disordered region. Residues 1–115 (MPPKFKRHLN…RRQMWWRGCK (115 aa)) lie on the Cytoplasmic side of the membrane. Serine 17 and serine 30 each carry phosphoserine. A v-SNARE coiled-coil homology domain is found at 52–112 (KIKHVQNQVD…KQLRRQMWWR (61 aa)). Residues 116 to 136 (IKAIMALVAAILLLVIIILIV) traverse the membrane as a helical; Anchor for type IV membrane protein segment. The Vesicular portion of the chain corresponds to 137 to 141 (MKYRT).

Belongs to the synaptobrevin family. As to quaternary structure, identified in a complex containing STX6, STX12, VAMP4 and VTI1A. Interacts with BAIAP3; this interaction is increased in the presence of calcium.

The protein resides in the golgi apparatus. It localises to the trans-Golgi network membrane. Its function is as follows. Involved in the pathway that functions to remove an inhibitor (probably synaptotagmin-4) of calcium-triggered exocytosis during the maturation of secretory granules. May be a marker for this sorting pathway that is critical for remodeling the secretory response of granule. This Homo sapiens (Human) protein is Vesicle-associated membrane protein 4 (VAMP4).